Reading from the N-terminus, the 377-residue chain is Flagellar P-ring protein (377 aa).

The first 33 residues, 1-33 (MRYPVSTGIAAPAWFAFFCAWAGLWTFSLPVQA), serve as a signal peptide directing secretion.

Belongs to the FlgI family. In terms of assembly, the basal body constitutes a major portion of the flagellar organelle and consists of four rings (L,P,S, and M) mounted on a central rod.

The protein resides in the periplasm. It localises to the bacterial flagellum basal body. Assembles around the rod to form the L-ring and probably protects the motor/basal body from shearing forces during rotation. In Nitrosospira multiformis (strain ATCC 25196 / NCIMB 11849 / C 71), this protein is Flagellar P-ring protein.